Reading from the N-terminus, the 891-residue chain is Alanine--tRNA ligase (891 aa).

Residues histidine 564, histidine 568, cysteine 677, and histidine 681 each coordinate Zn(2+).

Belongs to the class-II aminoacyl-tRNA synthetase family. It depends on Zn(2+) as a cofactor.

It is found in the cytoplasm. It catalyses the reaction tRNA(Ala) + L-alanine + ATP = L-alanyl-tRNA(Ala) + AMP + diphosphate. Catalyzes the attachment of alanine to tRNA(Ala) in a two-step reaction: alanine is first activated by ATP to form Ala-AMP and then transferred to the acceptor end of tRNA(Ala). Also edits incorrectly charged Ser-tRNA(Ala) and Gly-tRNA(Ala) via its editing domain. In Rhodopseudomonas palustris (strain BisA53), this protein is Alanine--tRNA ligase.